The sequence spans 211 residues: Guanylate kinase (211 aa).

The 181-residue stretch at 7-187 (GLLIILSGPS…AADRIIAIIR (181 aa)) folds into the Guanylate kinase-like domain. 14–21 (GPSGVGKA) is an ATP binding site.

The protein belongs to the guanylate kinase family.

Its subcellular location is the cytoplasm. The enzyme catalyses GMP + ATP = GDP + ADP. Functionally, essential for recycling GMP and indirectly, cGMP. This is Guanylate kinase from Aster yellows witches'-broom phytoplasma (strain AYWB).